The chain runs to 281 residues: uncharacterized protein (281 aa).

The N-terminal stretch at 1 to 23 (MKLYRSLKAALLPGICTSILLAS) is a signal peptide. C24 carries the N-palmitoyl cysteine lipid modification. The S-diacylglycerol cysteine moiety is linked to residue C24. The tract at residues 145–165 (HHDHNHMHNHEHEHEEHHDEE) is disordered. The segment covering 150 to 161 (HMHNHEHEHEEH) has biased composition (basic and acidic residues).

The protein resides in the cell membrane. This is an uncharacterized protein from Mycoplasma genitalium (strain ATCC 33530 / DSM 19775 / NCTC 10195 / G37) (Mycoplasmoides genitalium).